The chain runs to 369 residues: Aminomethyltransferase (369 aa).

This sequence belongs to the GcvT family. As to quaternary structure, the glycine cleavage system is composed of four proteins: P, T, L and H.

It carries out the reaction N(6)-[(R)-S(8)-aminomethyldihydrolipoyl]-L-lysyl-[protein] + (6S)-5,6,7,8-tetrahydrofolate = N(6)-[(R)-dihydrolipoyl]-L-lysyl-[protein] + (6R)-5,10-methylene-5,6,7,8-tetrahydrofolate + NH4(+). The glycine cleavage system catalyzes the degradation of glycine. This Xanthomonas campestris pv. campestris (strain 8004) protein is Aminomethyltransferase.